The chain runs to 472 residues: Glycogen synthase (472 aa).

Lys-16 contacts ADP-alpha-D-glucose.

This sequence belongs to the glycosyltransferase 1 family. Bacterial/plant glycogen synthase subfamily.

It carries out the reaction [(1-&gt;4)-alpha-D-glucosyl](n) + ADP-alpha-D-glucose = [(1-&gt;4)-alpha-D-glucosyl](n+1) + ADP + H(+). It participates in glycan biosynthesis; glycogen biosynthesis. Its function is as follows. Synthesizes alpha-1,4-glucan chains using ADP-glucose. The protein is Glycogen synthase of Jannaschia sp. (strain CCS1).